A 172-amino-acid polypeptide reads, in one-letter code: Nucleoside-triphosphatase THEP1 (172 aa).

Residues 11–18 and 101–108 contribute to the ATP site; these read GKPGIGKT and IILIDEIG.

This sequence belongs to the THEP1 NTPase family.

It carries out the reaction a ribonucleoside 5'-triphosphate + H2O = a ribonucleoside 5'-diphosphate + phosphate + H(+). Functionally, has nucleotide phosphatase activity towards ATP, GTP, CTP, TTP and UTP. May hydrolyze nucleoside diphosphates with lower efficiency. This is Nucleoside-triphosphatase THEP1 from Sulfolobus acidocaldarius (strain ATCC 33909 / DSM 639 / JCM 8929 / NBRC 15157 / NCIMB 11770).